The primary structure comprises 159 residues: NADH-quinone oxidoreductase subunit I (159 aa).

4Fe-4S ferredoxin-type domains follow at residues 51–80 (RRYENGEERCIACKLCEAICPAQAIVIEAD) and 90–119 (TRYDIDMTKCIYCGLCQEACPVDAIVEGPN). Cys-60, Cys-63, Cys-66, Cys-70, Cys-99, Cys-102, Cys-105, and Cys-109 together coordinate [4Fe-4S] cluster.

Belongs to the complex I 23 kDa subunit family. NDH-1 is composed of 14 different subunits. Subunits NuoA, H, J, K, L, M, N constitute the membrane sector of the complex. Requires [4Fe-4S] cluster as cofactor.

It is found in the cell inner membrane. It catalyses the reaction a quinone + NADH + 5 H(+)(in) = a quinol + NAD(+) + 4 H(+)(out). NDH-1 shuttles electrons from NADH, via FMN and iron-sulfur (Fe-S) centers, to quinones in the respiratory chain. The immediate electron acceptor for the enzyme in this species is believed to be ubiquinone. Couples the redox reaction to proton translocation (for every two electrons transferred, four hydrogen ions are translocated across the cytoplasmic membrane), and thus conserves the redox energy in a proton gradient. This Rickettsia felis (strain ATCC VR-1525 / URRWXCal2) (Rickettsia azadi) protein is NADH-quinone oxidoreductase subunit I.